Reading from the N-terminus, the 190-residue chain is Selenoprotein S (190 aa).

The helical transmembrane segment at 28–48 (SLLASYGWYILFSCILLYIVI) threads the bilayer. Residues 78-90 (RQEALAAARLRMQ) are VCP/p97-interacting motif (VIM). The segment at 115-190 (KIEMWDSMQE…RRGPSSGGUN (76 aa)) is disordered. Over residues 160 to 174 (RGGGYNPLTGEGGGT) the composition is skewed to gly residues. Position 189 (Sec189) is a non-standard amino acid, selenocysteine.

This sequence belongs to the selenoprotein S family. Interacts with DERL1 and (via VIM motif) with VCP, suggesting that it forms a membrane complex with DERL1 that serves as a receptor for VCP. Also interacts with DERL2, DERL3 and SELENOK. The SELENOK-SELENOS complex interacts with VCP. Interacts with CCDC47. Truncated SELENOS proteins produced by failed UGA/Sec decoding are ubiquitinated by the CRL2(KLHDC2) and CRL2(KLHDC3) complexes, which recognizes the glycine (Gly) at the C-terminus of truncated SELENOS proteins. Truncated SELENOS proteins produced by failed UGA/Sec decoding are also ubiquitinated by the CRL5(KLHDC1) complex.

It is found in the endoplasmic reticulum membrane. The protein localises to the cytoplasm. Functionally, involved in the degradation process of misfolded endoplasmic reticulum (ER) luminal proteins. Participates in the transfer of misfolded proteins from the ER to the cytosol, where they are destroyed by the proteasome in a ubiquitin-dependent manner. Probably acts by serving as a linker between DERL1, which mediates the retrotranslocation of misfolded proteins into the cytosol, and the ATPase complex VCP, which mediates the translocation and ubiquitination. The sequence is that of Selenoprotein S from Mus musculus (Mouse).